The sequence spans 274 residues: ATP synthase subunit a (274 aa).

The next 5 helical transmembrane spans lie at 43–63 (TLNI…LYVF), 103–123 (VIAP…VMDL), 144–164 (VVPT…FVLI), 223–243 (LIFI…LSLP), and 245–265 (AIFH…LTIV).

The protein belongs to the ATPase A chain family. In terms of assembly, F-type ATPases have 2 components, CF(1) - the catalytic core - and CF(0) - the membrane proton channel. CF(1) has five subunits: alpha(3), beta(3), gamma(1), delta(1), epsilon(1). CF(0) has three main subunits: a(1), b(2) and c(9-12). The alpha and beta chains form an alternating ring which encloses part of the gamma chain. CF(1) is attached to CF(0) by a central stalk formed by the gamma and epsilon chains, while a peripheral stalk is formed by the delta and b chains.

The protein resides in the cell inner membrane. Key component of the proton channel; it plays a direct role in the translocation of protons across the membrane. This is ATP synthase subunit a from Photorhabdus laumondii subsp. laumondii (strain DSM 15139 / CIP 105565 / TT01) (Photorhabdus luminescens subsp. laumondii).